Consider the following 191-residue polypeptide: Imidazoleglycerol-phosphate dehydratase (191 aa).

This sequence belongs to the imidazoleglycerol-phosphate dehydratase family.

The protein localises to the cytoplasm. The catalysed reaction is D-erythro-1-(imidazol-4-yl)glycerol 3-phosphate = 3-(imidazol-4-yl)-2-oxopropyl phosphate + H2O. Its pathway is amino-acid biosynthesis; L-histidine biosynthesis; L-histidine from 5-phospho-alpha-D-ribose 1-diphosphate: step 6/9. The sequence is that of Imidazoleglycerol-phosphate dehydratase from Thermodesulfovibrio yellowstonii (strain ATCC 51303 / DSM 11347 / YP87).